A 44-amino-acid chain; its full sequence is Defensin ARD1 (44 aa).

3 disulfide bridges follow: C7–C32, C18–C40, and C22–C42.

It is found in the secreted. Its function is as follows. Possesses potent anti-fungal activity. This is Defensin ARD1 from Archaeoprepona demophon (One-spotted leafwing butterfly).